Reading from the N-terminus, the 269-residue chain is Hydroxyethylthiazole kinase (269 aa).

Residue Met-45 coordinates substrate. ATP is bound by residues Arg-121 and Thr-167. Gly-194 serves as a coordination point for substrate.

The protein belongs to the Thz kinase family. Requires Mg(2+) as cofactor.

It carries out the reaction 5-(2-hydroxyethyl)-4-methylthiazole + ATP = 4-methyl-5-(2-phosphooxyethyl)-thiazole + ADP + H(+). It functions in the pathway cofactor biosynthesis; thiamine diphosphate biosynthesis; 4-methyl-5-(2-phosphoethyl)-thiazole from 5-(2-hydroxyethyl)-4-methylthiazole: step 1/1. Catalyzes the phosphorylation of the hydroxyl group of 4-methyl-5-beta-hydroxyethylthiazole (THZ). In Bacillus licheniformis (strain ATCC 14580 / DSM 13 / JCM 2505 / CCUG 7422 / NBRC 12200 / NCIMB 9375 / NCTC 10341 / NRRL NRS-1264 / Gibson 46), this protein is Hydroxyethylthiazole kinase.